The following is a 125-amino-acid chain: Small ribosomal subunit protein uS12m (125 aa).

It belongs to the universal ribosomal protein uS12 family.

It is found in the mitochondrion. Functionally, protein S12 is involved in the translation initiation step. In Brassica napus (Rape), this protein is Small ribosomal subunit protein uS12m (RPS12).